We begin with the raw amino-acid sequence, 142 residues long: Large ribosomal subunit protein uL11 (142 aa).

Belongs to the universal ribosomal protein uL11 family. In terms of assembly, part of the ribosomal stalk of the 50S ribosomal subunit. Interacts with L10 and the large rRNA to form the base of the stalk. L10 forms an elongated spine to which L12 dimers bind in a sequential fashion forming a multimeric L10(L12)X complex. In terms of processing, one or more lysine residues are methylated.

Forms part of the ribosomal stalk which helps the ribosome interact with GTP-bound translation factors. The chain is Large ribosomal subunit protein uL11 from Shewanella frigidimarina (strain NCIMB 400).